A 546-amino-acid chain; its full sequence is Chaperonin GroEL 1 (546 aa).

ATP contacts are provided by residues 30 to 33 (TLGP), Lys-51, 87 to 91 (DGTTT), Gly-415, 479 to 481 (NAA), and Asp-495. Residues 526–546 (KEDAPMPGGMPGGMGGMGMDM) are disordered. Positions 534–546 (GMPGGMGGMGMDM) are enriched in gly residues.

This sequence belongs to the chaperonin (HSP60) family. As to quaternary structure, forms a cylinder of 14 subunits composed of two heptameric rings stacked back-to-back. Interacts with the co-chaperonin GroES.

Its subcellular location is the cytoplasm. The enzyme catalyses ATP + H2O + a folded polypeptide = ADP + phosphate + an unfolded polypeptide.. Its function is as follows. Together with its co-chaperonin GroES, plays an essential role in assisting protein folding. The GroEL-GroES system forms a nano-cage that allows encapsulation of the non-native substrate proteins and provides a physical environment optimized to promote and accelerate protein folding. The chain is Chaperonin GroEL 1 from Burkholderia pseudomallei (strain K96243).